The following is a 209-amino-acid chain: Holliday junction branch migration complex subunit RuvA (209 aa).

The interval 1-70 (MINYLKGKTT…EDQQILYGFS (70 aa)) is domain I. Positions 71–149 (TDSERDLFRQ…QWEQAIALKT (79 aa)) are domain II. The segment at 150-160 (PVSVGVPSREI) is flexible linker. The interval 160-209 (ILEEVEMTLLALGYTDEEIDQAISAISQDNLLLKNPHVEEWLKSAIAWLS) is domain III.

This sequence belongs to the RuvA family. Homotetramer. Forms an RuvA(8)-RuvB(12)-Holliday junction (HJ) complex. HJ DNA is sandwiched between 2 RuvA tetramers; dsDNA enters through RuvA and exits via RuvB. An RuvB hexamer assembles on each DNA strand where it exits the tetramer. Each RuvB hexamer is contacted by two RuvA subunits (via domain III) on 2 adjacent RuvB subunits; this complex drives branch migration. In the full resolvosome a probable DNA-RuvA(4)-RuvB(12)-RuvC(2) complex forms which resolves the HJ.

Its subcellular location is the cytoplasm. The RuvA-RuvB-RuvC complex processes Holliday junction (HJ) DNA during genetic recombination and DNA repair, while the RuvA-RuvB complex plays an important role in the rescue of blocked DNA replication forks via replication fork reversal (RFR). RuvA specifically binds to HJ cruciform DNA, conferring on it an open structure. The RuvB hexamer acts as an ATP-dependent pump, pulling dsDNA into and through the RuvAB complex. HJ branch migration allows RuvC to scan DNA until it finds its consensus sequence, where it cleaves and resolves the cruciform DNA. The polypeptide is Holliday junction branch migration complex subunit RuvA (Gloeothece citriformis (strain PCC 7424) (Cyanothece sp. (strain PCC 7424))).